The following is a 177-amino-acid chain: ATP synthase subunit b (177 aa).

Residues 35 to 55 (FFVVLAIFLIVLAVIGTFVVP) form a helical membrane-spanning segment.

Belongs to the ATPase B chain family. In terms of assembly, F-type ATPases have 2 components, F(1) - the catalytic core - and F(0) - the membrane proton channel. F(1) has five subunits: alpha(3), beta(3), gamma(1), delta(1), epsilon(1). F(0) has three main subunits: a(1), b(2) and c(10-14). The alpha and beta chains form an alternating ring which encloses part of the gamma chain. F(1) is attached to F(0) by a central stalk formed by the gamma and epsilon chains, while a peripheral stalk is formed by the delta and b chains.

The protein resides in the cell membrane. F(1)F(0) ATP synthase produces ATP from ADP in the presence of a proton or sodium gradient. F-type ATPases consist of two structural domains, F(1) containing the extramembraneous catalytic core and F(0) containing the membrane proton channel, linked together by a central stalk and a peripheral stalk. During catalysis, ATP synthesis in the catalytic domain of F(1) is coupled via a rotary mechanism of the central stalk subunits to proton translocation. Functionally, component of the F(0) channel, it forms part of the peripheral stalk, linking F(1) to F(0). In Mycobacteroides abscessus (strain ATCC 19977 / DSM 44196 / CCUG 20993 / CIP 104536 / JCM 13569 / NCTC 13031 / TMC 1543 / L948) (Mycobacterium abscessus), this protein is ATP synthase subunit b.